Reading from the N-terminus, the 119-residue chain is Ribonuclease P protein component (119 aa).

Belongs to the RnpA family. Consists of a catalytic RNA component (M1 or rnpB) and a protein subunit.

It catalyses the reaction Endonucleolytic cleavage of RNA, removing 5'-extranucleotides from tRNA precursor.. In terms of biological role, RNaseP catalyzes the removal of the 5'-leader sequence from pre-tRNA to produce the mature 5'-terminus. It can also cleave other RNA substrates such as 4.5S RNA. The protein component plays an auxiliary but essential role in vivo by binding to the 5'-leader sequence and broadening the substrate specificity of the ribozyme. This chain is Ribonuclease P protein component, found in Pectobacterium atrosepticum (strain SCRI 1043 / ATCC BAA-672) (Erwinia carotovora subsp. atroseptica).